The chain runs to 1127 residues: Testis-expressed protein 2 (1127 aa).

2 disordered regions span residues 1 to 27 (MTSL…HVQR) and 133 to 279 (AVSP…SFFK). The span at 133-187 (AVSPGSSSSGPLASSPSVSSLSEQKTSSSSPLSSPSKSPILSSSASTSTLSSAKP) shows a compositional bias: low complexity. A Phosphoserine modification is found at S196. Residues 249–275 (QFTQPRNTGGDSKTAPSSPLTSPSDTR) are compositionally biased toward polar residues. Position 262 is a phosphothreonine (T262). S265, S266, S270, and S295 each carry phosphoserine. N-linked (GlcNAc...) asparagine glycosylation is present at N330. Positions 348–386 (EEECDSEGDGYGSDSNIPRSDHPKSTGEPTREIELKSSQ) are disordered. Residues 366–382 (RSDHPKSTGEPTREIEL) are compositionally biased toward basic and acidic residues. A run of 2 helical transmembrane segments spans residues 475-495 (TLGF…PHYV) and 497-517 (GLFL…WFFT). 4 disordered regions span residues 648–685 (KAQT…QRDQ), 715–764 (KKSS…QKEL), 786–816 (QESR…PPSE), and 947–980 (DEES…GYVG). Residues 650–670 (QTDKETSEEKPPAEGSEDPKK) show a composition bias toward basic and acidic residues. A phosphoserine mark is found at S732, S738, S744, S748, S751, S798, and S815. The segment covering 735-750 (NSPSGHLTHSRSSSKG) has biased composition (polar residues). Over residues 787 to 804 (ESRSPQRSPLQSAESSPT) the composition is skewed to polar residues. Positions 816 to 1101 (EEEEQEAWVN…MPNMDDVYIT (286 aa)) constitute an SMP-LTD domain. The span at 947–962 (DEESSSAGSSEEDDAP) shows a compositional bias: acidic residues.

Its subcellular location is the endoplasmic reticulum membrane. The protein localises to the nucleus membrane. During endoplasmic reticulum (ER) stress or when cellular ceramide levels increase, may induce contacts between the ER and medial-Golgi complex to facilitate non-vesicular transport of ceramides from the ER to the Golgi complex where they are converted to complex sphingolipids, preventing toxic ceramide accumulation. The protein is Testis-expressed protein 2 (TEX2) of Homo sapiens (Human).